A 147-amino-acid chain; its full sequence is Large ribosomal subunit protein uL13 (147 aa).

It belongs to the universal ribosomal protein uL13 family. As to quaternary structure, part of the 50S ribosomal subunit.

In terms of biological role, this protein is one of the early assembly proteins of the 50S ribosomal subunit, although it is not seen to bind rRNA by itself. It is important during the early stages of 50S assembly. The chain is Large ribosomal subunit protein uL13 from Mycobacterium marinum (strain ATCC BAA-535 / M).